We begin with the raw amino-acid sequence, 801 residues long: MEALSHVGIGLSPFQLCRLPPATTKLRRSHNTSTTICSASKWADRLLSDFNFTSDSSSSSFATATTTATLVSPPPSIDRPERHVPIPIDFYQVLGAQTHFLTDGIRRAFEARVSKPPQFGFSDDALISRRQILQAACETLSNPRSRREYNEGLLDDEEATVITDVPWDKVPGALCVLQEGGETEIVLRVGEALLKERLPKSFKQDVVLVMALAFLDVSRDAMALDPPDFITGYEFVEEALKLLQEEGASSLAPDLRAQIDETLEEITPRYVLELLGLPLGDDYAAKRLNGLSGVRNILWSVGGGGASALVGGLTREKFMNEAFLRMTAAEQVDLFVATPSNIPAESFEVYEVALALVAQAFIGKKPHLLQDADKQFQQLQQAKVMAMEIPAMLYDTRNNWEIDFGLERGLCALLIGKVDECRMWLGLDSEDSQYRNPAIVEFVLENSNRDDNDDLPGLCKLLETWLAGVVFPRFRDTKDKKFKLGDYYDDPMVLSYLERVEVVQGSPLAAAAAMARIGAEHVKASAMQALQKVFPSRYTDRNSAEPKDVQETVFSVDPVGNNVGRDGEPGVFIAEAVRPSENFETNDYAIRAGVSESSVDETTVEMSVADMLKEASVKILAAGVAIGLISLFSQKYFLKSSSSFQRKDMVSSMESDVATIGSVRADDSEALPRMDARTAENIVSKWQKIKSLAFGPDHRIEMLPEVLDGRMLKIWTDRAAETAQLGLVYDYTLLKLSVDSVTVSADGTRALVEATLEESACLSDLVHPENNATDVRTYTTRYEVFWSKSGWKITEGSVLAS.

Residues 1–67 (MEALSHVGIG…SSSFATATTT (67 aa)) constitute a chloroplast transit peptide. Topologically, residues 68–618 (ATLVSPPPSI…ADMLKEASVK (551 aa)) are stromal. Positions 89-153 (DFYQVLGAQT…RSRREYNEGL (65 aa)) constitute a J domain. Residues 619-638 (ILAAGVAIGLISLFSQKYFL) traverse the membrane as a helical segment. At 639–801 (KSSSSFQRKD…KITEGSVLAS (163 aa)) the chain is on the chloroplast intermembrane side. The segment at 639–801 (KSSSSFQRKD…KITEGSVLAS (163 aa)) is interaction with PDV2.

Self-interacts. Part of a complex made of ARC3, ARC6, FTSZ1 and FTSZ2. Interacts with FTSZ2-1 and FTSZ2-2 (via C-terminus), but not with FTSZ1; this interaction enables ARC3 binding to FTSZ2. Binds to CDT1A. Interacts (via C-terminus) with PDV2 (via C-terminus) in the chloroplast intermembrane space; this interaction induces homodimerization and leads to the formation of a heterotetramer containing two ARC6 and two PDV2 subunits. Interacts with MCD1 in the chloroplast stroma and facilitates its subsequent binding to FtsZ2-1. Interacts (via J domain) with CJD1 (via J-like domain). Mostly expressed in young leaves.

Its subcellular location is the plastid. It localises to the chloroplast inner membrane. Its function is as follows. Component of the plastid division machinery consisting in a binary fission accomplished by the simultaneous constriction of the FtsZ ring on the stromal side of the inner envelope membrane, and the ARC5 ring on the cytosolic side of the outer envelope membrane. Involved in the initiation of proplastid and plastid division (including chloroplasts, statoliths and leukoplasts). Promotes the assembly and/or stabilization of the plastid-dividing FtsZ ring, functioning as an antagonistic regulator of FtsZ dynamics against CDP1 and facilitating MCD1 positioning to membrane tethered FtsZ filaments to form the chloroplast Z-Ring; inhibits GDP-induced disassembly of FTSZ2 but enables ARC3 binding to FTSZ2-1. Relays plastid division site position between stroma and outer surface via interactions with the stromal FtsZ ring and the outer membrane PDV2 that recruits cytoplasmic ARC5 ring. Required for plastid equatorial positioning of PDV2 and ARC5. May contribute to gravitropism in stems and hypocotyls. Seems to influence stromule (stroma-filled tubular extensions of the plastid envelope membrane) length and frequency. The sequence is that of Protein ACCUMULATION AND REPLICATION OF CHLOROPLASTS 6, chloroplastic from Arabidopsis thaliana (Mouse-ear cress).